Reading from the N-terminus, the 655-residue chain is Tumor necrosis factor receptor superfamily member 21 (655 aa).

A signal peptide spans 1 to 41; it reads MGTSASSITALASCSRIAGQVGATMVAGSLLLLGFLSTITA. Over 42-349 the chain is Extracellular; it reads QPEQKTLSLT…PHKHFDINEH (308 aa). TNFR-Cys repeat units follow at residues 50 to 88, 90 to 131, 133 to 167, and 170 to 211; these read LTGT…LRVC, SCPS…DREC, CPPG…EDVR, and QCAR…DNVC. 9 cysteine pairs are disulfide-bonded: C67–C80, C70–C88, C91–C106, C109–C123, C113–C131, C133–C144, C150–C168, C171–C186, and C192–C211. A glycan (N-linked (GlcNAc...) asparagine) is linked at N82. Disordered regions lie at residues 214-306 and 318-338; these read HLSS…GPHH and EATG…HPRQ. Positions 216–225 are enriched in low complexity; it reads SSSSTTPSSP. Polar residues-rich tracts occupy residues 241 to 262 and 276 to 302; these read VPSS…TASV and PDNT…THQQ. Residues N252, N278, and N289 are each glycosylated (N-linked (GlcNAc...) asparagine). The chain crosses the membrane as a helical span at residues 350-370; it reads LPWMIVLFLLLVLVLIVVCSI. A lipid anchor (S-palmitoyl cysteine) is attached at C368. The Cytoplasmic segment spans residues 371 to 655; that stretch reads RKSSRTLKKG…SVYSHLPDLL (285 aa). In terms of domain architecture, Death spans 415-498; it reads GIDILKLVAA…DVVEKIRGLM (84 aa).

Associates with TRADD. Interacts with NGFR. Interacts with CASP8. In terms of processing, oxidized in response to reactive oxygen species (ROS), leading to endocytosis. As to expression, detected in brain (at protein level). Detected in corpus callosum oligodendrocytes. Detected in embryonic and adult brain.

It localises to the cell membrane. Promotes apoptosis, possibly via a pathway that involves the activation of NF-kappa-B. Can also promote apoptosis mediated by BAX and by the release of cytochrome c from the mitochondria into the cytoplasm. Trophic-factor deprivation triggers the cleavage of surface APP by beta-secretase to release sAPP-beta which is further cleaved to release an N-terminal fragment of APP (N-APP). Negatively regulates oligodendrocyte survival, maturation and myelination. Plays a role in signaling cascades triggered by stimulation of T-cell receptors, in the adaptive immune response and in the regulation of T-cell differentiation and proliferation. Negatively regulates T-cell responses and the release of cytokines such as IL4, IL5, IL10, IL13 and IFNG by Th2 cells. Negatively regulates the production of IgG, IgM and IgM in response to antigens. May inhibit the activation of JNK in response to T-cell stimulation. Also acts as a regulator of pyroptosis: recruits CASP8 in response to reactive oxygen species (ROS) and subsequent oxidation, leading to activation of GSDMC. The sequence is that of Tumor necrosis factor receptor superfamily member 21 (Tnfrsf21) from Rattus norvegicus (Rat).